A 772-amino-acid polypeptide reads, in one-letter code: Mitochondrial intermediate peptidase (772 aa).

Residues 1–37 (MLRTIILKAGSNASIPSLSRQNKLLRFFATAGAVSRT) constitute a mitochondrion transit peptide. H558 provides a ligand contact to Zn(2+). Residue E559 is part of the active site. Residues H562 and H565 each coordinate Zn(2+).

This sequence belongs to the peptidase M3 family. Zn(2+) is required as a cofactor.

The protein localises to the mitochondrion matrix. It carries out the reaction Release of an N-terminal octapeptide as second stage of processing of some proteins imported into the mitochondrion.. With respect to regulation, stimulated by Fe(2+). In terms of biological role, cleaves proteins, imported into the mitochondrion, to their mature size. While most mitochondrial precursor proteins are processed to the mature form in one step by mitochondrial processing peptidase (MPP), the sequential cleavage by MIP of an octapeptide after initial processing by MPP is a required step for a subgroup of nuclear-encoded precursor proteins destined for the matrix or the inner membrane. Cleaves precursor proteins of respiratory components, including subunits of the electron transport chain and tricarboxylic acid cycle enzymes, and components of the mitochondrial genetic machinery, including ribosomal proteins, translation factors, and proteins required for mitochondrial DNA metabolism. This is Mitochondrial intermediate peptidase (OCT1) from Saccharomyces cerevisiae (strain YJM789) (Baker's yeast).